We begin with the raw amino-acid sequence, 142 residues long: Sorting nexin-3 (142 aa).

The region spanning asparagine 21–aspartate 138 is the PX domain. Residues arginine 64, serine 66, lysine 90, arginine 95, and arginine 104 each coordinate a 1,2-diacyl-sn-glycero-3-phospho-(1D-myo-inositol-3-phosphate).

The protein belongs to the sorting nexin family.

It localises to the cytoplasm. The protein resides in the golgi apparatus membrane. Its subcellular location is the prevacuolar compartment membrane. Required for retention of late Golgi membrane proteins. Component of the retrieval machinery that functions by direct interaction with the cytosolic tails of certain TGN membrane proteins during the sorting/budding process at the prevacuolar compartment. Binds phosphatidylinositol 3-phosphate (PtdIns(P3)). The chain is Sorting nexin-3 (snx-3) from Neurospora crassa (strain ATCC 24698 / 74-OR23-1A / CBS 708.71 / DSM 1257 / FGSC 987).